A 435-amino-acid chain; its full sequence is Keratin, type I cytoskeletal 18 (435 aa).

Residues 1-28 are compositionally biased toward low complexity; sequence MSLRSSYSVRSSTSQVPVSQMSQMSQMS. The segment at 1–36 is disordered; the sequence is MSLRSSYSVRSSTSQVPVSQMSQMSQMSIKRTTNVP. The tract at residues 2-88 is head; the sequence is SLRSSYSVRS…TGATGDIMGN (87 aa). The tract at residues 89-123 is coil 1A; that stretch reads EKMAMQNLNDRLASYLRSETLEQANSKLELKIREA. The 311-residue stretch at 89–399 folds into the IF rod domain; the sequence is EKMAMQNLND…RLLDGGDFKL (311 aa). The segment at 124–140 is linker 1; that stretch reads LEKKGPEVCDYSRFQPI. The coil 1B stretch occupies residues 141 to 232; the sequence is IDDLRRKIFD…KNHDNEVMEL (92 aa). The tract at residues 233-256 is linker 12; the sequence is RNQISHSGVQVDVDAPKGQDLAKI. The segment at 257 to 394 is coil 2; the sequence is MEEIRSKYEK…IATYRRLLDG (138 aa). The segment at 395 to 435 is tail; the sequence is GDFKLQDALEEQKRVKVMTVTQTLVDGKVVSSSTETKEKKF.

It belongs to the intermediate filament family. As to quaternary structure, heterotetramer of two type I and two type II keratins. Keratin-18 associates with keratin-8. Phosphorylated. Post-translationally, proteolytically cleaved by caspases during epithelial cell apoptosis. As to expression, abundantly expressed in an even distribution throughout the optic nerve, localizing specifically to the astrocyte domains. Moderately expressed in spinal cord, brain, liver and oocytes.

Its function is as follows. When phosphorylated, plays a role in filament reorganization. The chain is Keratin, type I cytoskeletal 18 (krt18) from Carassius auratus (Goldfish).